Reading from the N-terminus, the 529-residue chain is Bifunctional purine biosynthesis protein PurH (529 aa).

An MGS-like domain is found at 1–148 (MQQRRPVRRA…KNHKDVAIVV (148 aa)).

Belongs to the PurH family.

The catalysed reaction is (6R)-10-formyltetrahydrofolate + 5-amino-1-(5-phospho-beta-D-ribosyl)imidazole-4-carboxamide = 5-formamido-1-(5-phospho-D-ribosyl)imidazole-4-carboxamide + (6S)-5,6,7,8-tetrahydrofolate. It catalyses the reaction IMP + H2O = 5-formamido-1-(5-phospho-D-ribosyl)imidazole-4-carboxamide. It participates in purine metabolism; IMP biosynthesis via de novo pathway; 5-formamido-1-(5-phospho-D-ribosyl)imidazole-4-carboxamide from 5-amino-1-(5-phospho-D-ribosyl)imidazole-4-carboxamide (10-formyl THF route): step 1/1. It functions in the pathway purine metabolism; IMP biosynthesis via de novo pathway; IMP from 5-formamido-1-(5-phospho-D-ribosyl)imidazole-4-carboxamide: step 1/1. The chain is Bifunctional purine biosynthesis protein PurH from Klebsiella pneumoniae (strain 342).